The following is a 64-amino-acid chain: Ribosome biogenesis protein Nop10 (64 aa).

Belongs to the NOP10 family.

In terms of biological role, involved in ribosome biogenesis; more specifically in 18S rRNA pseudouridylation and in cleavage of pre-rRNA. In Ignicoccus hospitalis (strain KIN4/I / DSM 18386 / JCM 14125), this protein is Ribosome biogenesis protein Nop10.